We begin with the raw amino-acid sequence, 539 residues long: Protein TIC 55, chloroplastic (539 aa).

The N-terminal 50 residues, 1 to 50 (MAVPFLSSSLQLTPTSPILFTKVTPTPIIHNHRSTCTIPTKPRLRLLRRS), are a transit peptide targeting the chloroplast. A51 bears the N-acetylalanine mark. Residues 51-482 (AVAGTAVSDQ…VIKSFELWKN (432 aa)) are Stromal-facing. The region spanning 88-193 (WYPLYLTKNV…VKDSQGVVWV (106 aa)) is the Rieske domain. C129, H131, C148, and H151 together coordinate [2Fe-2S] cluster. 2 residues coordinate Fe cation: H242 and H247. The short motif at 467–470 (CRSC) is the Redox-active motif element. A helical transmembrane segment spans residues 483 to 500 (ILSATAVALTALAILVVS). Topologically, residues 501 to 504 (RQWK) are chloroplast intermembrane. The helical transmembrane segment at 505–527 (AVLLGSAALCSAAAYTCLRAINL) threads the bilayer. Residues 528–539 (NTNNFIRTHRRL) are Stromal-facing.

Part of the Tic complex. Interacts with TIC62 and TIC110. [2Fe-2S] cluster is required as a cofactor. Highly expressed in green tissues and very low levels in non-photosynthetic tissues such as roots and etiolated seedlings.

The protein localises to the plastid. It localises to the chloroplast inner membrane. Functionally, involved in protein precursor import into chloroplasts. Part of the redox regulon consisting of TIC32, TIC 55 and TIC62. The chain is Protein TIC 55, chloroplastic (TIC55) from Arabidopsis thaliana (Mouse-ear cress).